A 262-amino-acid polypeptide reads, in one-letter code: Expansin-A7 (262 aa).

Positions 1–30 are cleaved as a signal peptide; it reads MGPISSSWSFNKFFSIVFVVFAISGEFVAG. Residues 55–167 enclose the Expansin-like EG45 domain; that stretch reads GGACGYGNLF…RRVPCQRSGG (113 aa). 3 cysteine pairs are disulfide-bonded: cysteine 58-cysteine 86, cysteine 89-cysteine 162, and cysteine 94-cysteine 100. The region spanning 177–257 is the Expansin-like CBD domain; it reads YWLLIFVMNV…NWSGGKTYKS (81 aa).

Belongs to the expansin family. Expansin A subfamily.

Its subcellular location is the secreted. The protein resides in the cell wall. It is found in the membrane. Functionally, causes loosening and extension of plant cell walls by disrupting non-covalent bonding between cellulose microfibrils and matrix glucans. No enzymatic activity has been found. In Arabidopsis thaliana (Mouse-ear cress), this protein is Expansin-A7 (EXPA7).